A 107-amino-acid chain; its full sequence is FK506-binding protein 1 (107 aa).

The PPIase FKBP-type domain maps to 19 to 107; sequence GSNVTVHHAG…VFEVELITFK (89 aa).

Belongs to the FKBP-type PPIase family.

It catalyses the reaction [protein]-peptidylproline (omega=180) = [protein]-peptidylproline (omega=0). Its activity is regulated as follows. Inhibited by both FK506 and rapamycin. Functionally, PPIases accelerate the folding of proteins by catalyzing the cis-trans isomerization of proline imidic peptide bonds in oligopeptides. The polypeptide is FK506-binding protein 1 (fkbp1) (Dictyostelium discoideum (Social amoeba)).